A 136-amino-acid polypeptide reads, in one-letter code: Protein YebF (136 aa).

An N-terminal signal peptide occupies residues 1 to 23 (MKKTGLALVLATILLGMMGSVHA). A YebF/Cmi domain is found at 30–117 (KVPACIGLNQ…KSGTMTYTGL (88 aa)). Cysteines 34 and 107 form a disulfide. The interval 117-136 (LNAQTRPDPQIGLNSQAGPK) is disordered.

It belongs to the YebF family.

It is found in the secreted. The chain is Protein YebF from Yersinia pseudotuberculosis serotype O:1b (strain IP 31758).